A 349-amino-acid polypeptide reads, in one-letter code: NADH-ubiquinone oxidoreductase chain 2 (349 aa).

9 helical membrane passes run 3 to 23, 66 to 86, 98 to 118, 139 to 159, 178 to 198, 199 to 219, 240 to 260, 274 to 294, and 319 to 339; these read PYVLTILLSSLGLGTVLTFAS, AAAMILFASTTNAWLVGEWEI, VMLALALKLGLAPVHFWLPEV, FALMIQVAPTINSSLLVTIGL, ILAYLPIAHLGWMVLILQFAP, SLTLLSLSLYIVMTSSAFLTL, LAALTALVLLSLGGLPPLSGF, GLPLSATLAAMTALLSLYFYL, and FTMITLPLSITTIMALGLLPL.

The protein belongs to the complex I subunit 2 family.

The protein localises to the mitochondrion inner membrane. The enzyme catalyses a ubiquinone + NADH + 5 H(+)(in) = a ubiquinol + NAD(+) + 4 H(+)(out). In terms of biological role, core subunit of the mitochondrial membrane respiratory chain NADH dehydrogenase (Complex I) that is believed to belong to the minimal assembly required for catalysis. Complex I functions in the transfer of electrons from NADH to the respiratory chain. The immediate electron acceptor for the enzyme is believed to be ubiquinone. This Oncorhynchus mykiss (Rainbow trout) protein is NADH-ubiquinone oxidoreductase chain 2 (MT-ND2).